A 310-amino-acid chain; its full sequence is Transcriptional regulator NRG1 (310 aa).

The segment at 85-131 is disordered; the sequence is YYMGPPAQHRLPTPPPYPMSSPTTATAATPLSQQSPHLQPQQTLQQP. Low complexity predominate over residues 104–131; sequence SSPTTATAATPLSQQSPHLQPQQTLQQP. 2 C2H2-type zinc fingers span residues 228–250 and 256–280; these read HVCK…NRIH and HQCP…YKTH.

Its subcellular location is the nucleus. Transcriptional repressor that binds NRG1 response elements (NRE) of target promoters. Involved in regulation of chlamydospore formation, hyphal growth, virulence, and stress response. Plays a key role in regulating true hyphal growth, but does not regulate pseudohyphal growth in the same fashion. Directs transcriptional repression of a subset of filament-specific genes such as HWP1, HYR1, ALS8, HWP1, or ECE1; via the TUP1 pathway. Functions with UME6 in a negative feedback loop to control the level and duration of filament-specific gene expression in response to inducing conditions. Plays a key role in biofilm formation and dispersion. Also plays the role of a negative regulator of virulence in mice models. Required for the expression of the cell wall genes RBR1. The chain is Transcriptional regulator NRG1 (NRG1) from Candida albicans (strain SC5314 / ATCC MYA-2876) (Yeast).